We begin with the raw amino-acid sequence, 436 residues long: UDP-N-acetylmuramate--L-alanine ligase (436 aa).

108 to 114 (GAHGKTS) contacts ATP.

This sequence belongs to the MurCDEF family.

It localises to the cytoplasm. The enzyme catalyses UDP-N-acetyl-alpha-D-muramate + L-alanine + ATP = UDP-N-acetyl-alpha-D-muramoyl-L-alanine + ADP + phosphate + H(+). The protein operates within cell wall biogenesis; peptidoglycan biosynthesis. In terms of biological role, cell wall formation. This is UDP-N-acetylmuramate--L-alanine ligase from Bacillus cereus (strain B4264).